The following is a 504-amino-acid chain: Histidine ammonia-lyase (504 aa).

Residues 142-144 constitute a cross-link (5-imidazolinone (Ala-Gly)); it reads ASG. At S143 the chain carries 2,3-didehydroalanine (Ser).

The protein belongs to the PAL/histidase family. Post-translationally, contains an active site 4-methylidene-imidazol-5-one (MIO), which is formed autocatalytically by cyclization and dehydration of residues Ala-Ser-Gly.

Its subcellular location is the cytoplasm. It carries out the reaction L-histidine = trans-urocanate + NH4(+). It participates in amino-acid degradation; L-histidine degradation into L-glutamate; N-formimidoyl-L-glutamate from L-histidine: step 1/3. This Staphylococcus aureus (strain JH1) protein is Histidine ammonia-lyase.